We begin with the raw amino-acid sequence, 925 residues long: Colossin-D (925 aa).

Positions 1 to 26 are cleaved as a signal peptide; the sequence is MIKVFKDLKFLILITIILLNLKSINC. Asn47, Asn95, Asn142, Asn166, Asn283, Asn334, Asn344, Asn378, Asn401, Asn511, and Asn642 each carry an N-linked (GlcNAc...) asparagine glycan.

Belongs to the serine-aspartate repeat-containing protein (SDr) family.

It is found in the secreted. This chain is Colossin-D (colD), found in Dictyostelium discoideum (Social amoeba).